Reading from the N-terminus, the 318-residue chain is Carnitine monooxygenase reductase subunit (318 aa).

The 103-residue stretch at 5–107 (YEMFPAVVTR…SEPKNLFPLA (103 aa)) folds into the FAD-binding FR-type domain. One can recognise a 2Fe-2S ferredoxin-type domain in the interval 233-318 (FTVVLAKSNQ…AKGKKLVLDL (86 aa)). Residues Cys267, Cys272, Cys275, and Cys305 each contribute to the [2Fe-2S] cluster site.

This sequence belongs to the PDR/VanB family. CntB subfamily. As to quaternary structure, composed of an oxygenase subunit (cntA) and a reductase subunit (cntB). Requires FMN as cofactor. The cofactor is [2Fe-2S] cluster.

It catalyses the reaction (R)-carnitine + NADH + O2 + H(+) = (3R)-3-hydroxy-4-oxobutanoate + trimethylamine + NAD(+) + H2O. The catalysed reaction is (R)-carnitine + NADPH + O2 + H(+) = (3R)-3-hydroxy-4-oxobutanoate + trimethylamine + NADP(+) + H2O. Its pathway is amine and polyamine metabolism; carnitine metabolism. Converts carnitine to trimethylamine and malic semialdehyde. This chain is Carnitine monooxygenase reductase subunit, found in Acinetobacter baumannii (strain ATCC 19606 / DSM 30007 / JCM 6841 / CCUG 19606 / CIP 70.34 / NBRC 109757 / NCIMB 12457 / NCTC 12156 / 81).